Reading from the N-terminus, the 64-residue chain is Large ribosomal subunit protein bL35 (64 aa).

Residues 1-44 show a composition bias toward basic residues; sequence MSKIKSHSGAAKRFKRTANGFKHKQSHTSHILTKKSTKRKRHLR. The disordered stretch occupies residues 1-48; it reads MSKIKSHSGAAKRFKRTANGFKHKQSHTSHILTKKSTKRKRHLRSMNQ.

It belongs to the bacterial ribosomal protein bL35 family.

This chain is Large ribosomal subunit protein bL35, found in Marinomonas sp. (strain MWYL1).